Consider the following 364-residue polypeptide: B3 domain-containing protein At5g38490 (364 aa).

A disordered region spans residues 148 to 202; that stretch reads ASTSSSSLLNLPCLEPSTETKDVPNPNYQSSSPSSCLTGKTNRKRRAVEQRKSGK. The segment at residues 260 to 364 is a DNA-binding region (TF-B3); sequence FQKLIRNDFL…GVLCFALDTE (105 aa).

It is found in the nucleus. The protein is B3 domain-containing protein At5g38490 of Arabidopsis thaliana (Mouse-ear cress).